The chain runs to 129 residues: Phosphoribosyl-AMP cyclohydrolase (129 aa).

Mg(2+) is bound at residue D77. C78 is a binding site for Zn(2+). Mg(2+)-binding residues include D79 and D81. Residues C94 and C101 each coordinate Zn(2+).

It belongs to the PRA-CH family. Homodimer. Mg(2+) is required as a cofactor. The cofactor is Zn(2+).

The protein resides in the cytoplasm. The enzyme catalyses 1-(5-phospho-beta-D-ribosyl)-5'-AMP + H2O = 1-(5-phospho-beta-D-ribosyl)-5-[(5-phospho-beta-D-ribosylamino)methylideneamino]imidazole-4-carboxamide. Its pathway is amino-acid biosynthesis; L-histidine biosynthesis; L-histidine from 5-phospho-alpha-D-ribose 1-diphosphate: step 3/9. Catalyzes the hydrolysis of the adenine ring of phosphoribosyl-AMP. The sequence is that of Phosphoribosyl-AMP cyclohydrolase from Pelotomaculum thermopropionicum (strain DSM 13744 / JCM 10971 / SI).